The primary structure comprises 480 residues: Probable glycosyltransferase 2 (480 aa).

Positions 1–21 (MGQEGMGYNNGKGGGGGGGGL) are enriched in gly residues. The segment at 1–45 (MGQEGMGYNNGKGGGGGGGGLPMTAPRPRGASPLSSHGHHHRSRK) is disordered. At 1–49 (MGQEGMGYNNGKGGGGGGGGLPMTAPRPRGASPLSSHGHHHRSRKIHRT) the chain is on the cytoplasmic side. Residues 50–72 (FNNVKITVLCGLVTILVLRGTIG) traverse the membrane as a helical; Signal-anchor for type II membrane protein segment. Residues 73-480 (LNLSLPNQPT…DVKAKISTTS (408 aa)) lie on the Lumenal side of the membrane. N-linked (GlcNAc...) asparagine glycans are attached at residues asparagine 74, asparagine 124, asparagine 129, and asparagine 458.

This sequence belongs to the glycosyltransferase 34 family.

The protein resides in the golgi apparatus membrane. Probable glycosyltransferase that may be involved in the biosynthesis of xyloglucan. The chain is Probable glycosyltransferase 2 from Oryza sativa subsp. indica (Rice).